A 387-amino-acid polypeptide reads, in one-letter code: Succinate--CoA ligase [ADP-forming] subunit beta (387 aa).

The 237-residue stretch at 9–245 folds into the ATP-grasp domain; sequence KDLLESYGLK…KSQENAKELK (237 aa). Residues Lys46, 53–55, Glu100, Tyr103, and Glu108 contribute to the ATP site; that span reads GRG. Residues Asn200 and Asp214 each coordinate Mg(2+). Residues Asn265 and 322–324 contribute to the substrate site; that span reads GIV.

The protein belongs to the succinate/malate CoA ligase beta subunit family. In terms of assembly, heterotetramer of two alpha and two beta subunits. Requires Mg(2+) as cofactor.

The catalysed reaction is succinate + ATP + CoA = succinyl-CoA + ADP + phosphate. It carries out the reaction GTP + succinate + CoA = succinyl-CoA + GDP + phosphate. Its pathway is carbohydrate metabolism; tricarboxylic acid cycle; succinate from succinyl-CoA (ligase route): step 1/1. Functionally, succinyl-CoA synthetase functions in the citric acid cycle (TCA), coupling the hydrolysis of succinyl-CoA to the synthesis of either ATP or GTP and thus represents the only step of substrate-level phosphorylation in the TCA. The beta subunit provides nucleotide specificity of the enzyme and binds the substrate succinate, while the binding sites for coenzyme A and phosphate are found in the alpha subunit. In Francisella tularensis subsp. holarctica (strain OSU18), this protein is Succinate--CoA ligase [ADP-forming] subunit beta.